The chain runs to 97 residues: Putative CC-type chemokine U83 (97 aa).

Intrachain disulfides connect cysteine 32/cysteine 62 and cysteine 33/cysteine 76.

It belongs to the intercrine beta (chemokine CC) family. Highly divergent.

This is Putative CC-type chemokine U83 (U83) from Human herpesvirus 6A (strain Uganda-1102) (HHV-6 variant A).